The following is a 458-amino-acid chain: Methylenetetrahydrofolate--tRNA-(uracil-5-)-methyltransferase TrmFO (458 aa).

G12–G17 is a binding site for FAD.

Belongs to the MnmG family. TrmFO subfamily. The cofactor is FAD.

The protein localises to the cytoplasm. The catalysed reaction is uridine(54) in tRNA + (6R)-5,10-methylene-5,6,7,8-tetrahydrofolate + NADH + H(+) = 5-methyluridine(54) in tRNA + (6S)-5,6,7,8-tetrahydrofolate + NAD(+). It catalyses the reaction uridine(54) in tRNA + (6R)-5,10-methylene-5,6,7,8-tetrahydrofolate + NADPH + H(+) = 5-methyluridine(54) in tRNA + (6S)-5,6,7,8-tetrahydrofolate + NADP(+). Functionally, catalyzes the folate-dependent formation of 5-methyl-uridine at position 54 (M-5-U54) in all tRNAs. The polypeptide is Methylenetetrahydrofolate--tRNA-(uracil-5-)-methyltransferase TrmFO (Deinococcus geothermalis (strain DSM 11300 / CIP 105573 / AG-3a)).